A 464-amino-acid polypeptide reads, in one-letter code: Adenylyltransferase and sulfurtransferase MOCS3 (464 aa).

Residues glycine 101, aspartate 122, 129 to 133, lysine 146, and 190 to 191 contribute to the ATP site; these read NNMHR and DN. The Zn(2+) site is built by cysteine 231 and cysteine 234. The active-site Glycyl thioester intermediate; for adenylyltransferase activity is the cysteine 248. Zn(2+) contacts are provided by cysteine 306 and cysteine 309. The 105-residue stretch at 358-462 folds into the Rhodanese domain; sequence KKEQHVLLDV…WAANVNPNFP (105 aa). Cysteine 422 acts as the Cysteine persulfide intermediate; for sulfurtransferase activity in catalysis.

It in the N-terminal section; belongs to the HesA/MoeB/ThiF family. UBA4 subfamily. The cofactor is Zn(2+).

It localises to the cytoplasm. The catalysed reaction is [molybdopterin-synthase sulfur-carrier protein]-C-terminal Gly-Gly + ATP + H(+) = [molybdopterin-synthase sulfur-carrier protein]-C-terminal Gly-Gly-AMP + diphosphate. It carries out the reaction [molybdopterin-synthase sulfur-carrier protein]-C-terminal Gly-Gly-AMP + S-sulfanyl-L-cysteinyl-[cysteine desulfurase] + AH2 = [molybdopterin-synthase sulfur-carrier protein]-C-terminal-Gly-aminoethanethioate + L-cysteinyl-[cysteine desulfurase] + A + AMP + 2 H(+). The protein operates within tRNA modification; 5-methoxycarbonylmethyl-2-thiouridine-tRNA biosynthesis. It participates in cofactor biosynthesis; molybdopterin biosynthesis. Plays a central role in 2-thiolation of mcm(5)S(2)U at tRNA wobble positions of cytosolic tRNA(Lys), tRNA(Glu) and tRNA(Gln). Also essential during biosynthesis of the molybdenum cofactor. Acts by mediating the C-terminal thiocarboxylation of sulfur carriers URM1 and MOCS2A. Its N-terminus first activates URM1 and MOCS2A as acyl-adenylates (-COAMP), then the persulfide sulfur on the catalytic cysteine is transferred to URM1 and MOCS2A to form thiocarboxylation (-COSH) of their C-terminus. The reaction probably involves hydrogen sulfide that is generated from the persulfide intermediate and that acts as a nucleophile towards URM1 and MOCS2A. Subsequently, a transient disulfide bond is formed. Does not use thiosulfate as sulfur donor; NFS1 probably acting as a sulfur donor for thiocarboxylation reactions. In Arabidopsis thaliana (Mouse-ear cress), this protein is Adenylyltransferase and sulfurtransferase MOCS3.